Reading from the N-terminus, the 788-residue chain is Leucine-rich repeat and fibronectin type-III domain-containing protein 2 (788 aa).

The N-terminal stretch at 1-20 (METLLGGLLAFGMAFAVVDA) is a signal peptide. One can recognise an LRRNT domain in the interval 21 to 52 (CPKYCVCQNLSESLGTLCPSKGLLFVPPDIDR). Residues 21-534 (CPKYCVCQNL…MHSQILGGTM (514 aa)) lie on the Extracellular side of the membrane. An N-linked (GlcNAc...) asparagine glycan is attached at N29. 7 LRR repeats span residues 53-74 (RTVE…DFAN), 77-98 (GLVD…SFLD), 101-122 (SLRS…TLRG), 125-146 (NLQH…AFED), 150-171 (TLED…SVRR), 174-195 (NLHQ…TFAD), and 198-219 (KLAR…PIFA). Positions 242–288 (NPLHCNCELLWLRRLERDDDLETCGSPGSLKGRYFWHIREEEFVCEP) constitute an LRRCT domain. Residues 289–375 (PLITQHTHKL…GEATATVEVS (87 aa)) form the Ig-like domain. A disulfide bridge connects residues C310 and C359. 3 N-linked (GlcNAc...) asparagine glycosylation sites follow: N332, N341, and N384. Residues 383–423 (SNSTSRMAPPKSRLSDITGSSKTSRGGGGSGAGEPPKSTPE) are disordered. A Fibronectin type-III domain is found at 422–518 (PERAVLVSDV…GCAQFFTKAD (97 aa)). The helical transmembrane segment at 535–555 (ILVIGGIIVATLLVFIVILMV) threads the bilayer. Topologically, residues 556–788 (RYKVCNHDTP…SSEWVMESTV (233 aa)) are cytoplasmic. The span at 620-631 (CDSSSSSSLGSG) shows a compositional bias: low complexity. Disordered stretches follow at residues 620-655 (CDSS…PSLD) and 668-711 (SQRK…RSLL). Residues 642-651 (RLPPPAPRPK) are compositionally biased toward pro residues. Positions 785 to 788 (ESTV) match the PDZ-binding motif.

It belongs to the LRFN family. As to quaternary structure, forms heteromeric complexes with LRFN1, LRFN3, LRFN4 and LRFN5. Can form homomeric complexes, but not across cell junctions. Interacts with DLG4. Directly interacts with DLG1, DLG2 and DLG3. Directly interacts with 2 NMDA receptor subunits GRIN1 and GRIN2A. Glycosylated. Predominantly expressed in the brain, with a weak, but broad expression in the cerebral cortex and diencephalic nuclei. Strongly expressed in both the pyramidal layer and the dentate gyrus of the hippocampus. Also detected in other parts of the central nervous system, including the olfactory bulb, pons, cerebellum, and medulla oblongata, as well as in the peripheral nervous system, such as the ganglia of cranial nerves and the dorsal root ganglion during gestation.

The protein localises to the membrane. It is found in the synapse. Its subcellular location is the postsynaptic cell membrane. Functionally, promotes neurite outgrowth in hippocampal neurons. Enhances the cell surface expression of 2 NMDA receptor subunits GRIN1 and GRIN2A. May play a role in redistributing DLG4 to the cell periphery. This Mus musculus (Mouse) protein is Leucine-rich repeat and fibronectin type-III domain-containing protein 2 (Lrfn2).